Consider the following 337-residue polypeptide: MGNDSVSYEYGDYSDLSDRPVDCLDGACLAIDPLRVAPLPLYAAIFLVGVPGNAMVAWVAGKVARRRVGATWLLHLAVADLLCCLSLPILAVPIARGGHWPYGAVGCRALPSIILLTMYASVLLLAALSADLCFLALGPAWWSTVQRACGVQVACGAAWTLALLLTVPSAIYRRLHQEHFPARLQCVVDYGGSSSTENAVTAIRFLFGFLGPLVAVASCHSALLCWAARRCRPLGTAIVVGFFVCWAPYHLLGLVLTVAAPNSALLARALRAEPLIVGLALAHSCLNPMLFLYFGRAQLRRSLPAACHWALRESQGQDESVDSKKSTSHDLVSEMEV.

Residues Met-1–Pro-38 are Extracellular-facing. N-linked (GlcNAc...) asparagine glycosylation is present at Asn-3. Residues Leu-39–Gly-61 form a helical membrane-spanning segment. The Cytoplasmic portion of the chain corresponds to Lys-62 to Trp-72. Residues Leu-73–Ala-95 form a helical membrane-spanning segment. The Extracellular portion of the chain corresponds to Arg-96–Ile-114. Residues Cys-107 and Cys-186 are joined by a disulfide bond. A helical membrane pass occupies residues Leu-115–Leu-137. Residues Gly-138–Cys-149 lie on the Cytoplasmic side of the membrane. Residues Gly-150–Tyr-172 form a helical membrane-spanning segment. Residues Arg-173–Ala-202 are Extracellular-facing. The helical transmembrane segment at Ile-203–Cys-225 threads the bilayer. Residues Trp-226–Ala-237 are Cytoplasmic-facing. A helical transmembrane segment spans residues Ile-238 to Ala-260. The Extracellular segment spans residues Pro-261–Pro-274. A helical transmembrane segment spans residues Leu-275 to Phe-294. The Cytoplasmic portion of the chain corresponds to Gly-295–Val-337. At Ser-320 the chain carries Phosphoserine.

It belongs to the G-protein coupled receptor 1 family. As to quaternary structure, interacts with C3 (the anaphylatoxin peptide C3a and the adipogenic hormone ASP); the interaction occurs with higher affinity for ASP, enhancing the phosphorylation and activation of GPR77, recruitment of ARRB2 to the cell surface and endocytosis of GRP77. As to expression, frontal cortex, hippocampus, hypothalamus, pons and liver.

Its subcellular location is the cell membrane. Its function is as follows. Receptor for the chemotactic and inflammatory C3a, C4a and C5a anaphylatoxin peptides and also for their dearginated forms ASP/C3adesArg, C4adesArg and C5adesArg respectively. Couples weakly to G(i)-mediated signaling pathways. The sequence is that of C5a anaphylatoxin chemotactic receptor 2 (C5AR2) from Homo sapiens (Human).